A 404-amino-acid polypeptide reads, in one-letter code: S-adenosylmethionine synthase (404 aa).

His17 is a binding site for ATP. Position 19 (Asp19) interacts with Mg(2+). Glu45 contributes to the K(+) binding site. L-methionine contacts are provided by Glu58 and Gln101. Positions 101–111 (QSADINRGVDR) are flexible loop. Residues 172-174 (DAK), 245-246 (RF), Asp254, 260-261 (RK), Ala277, and Lys281 each bind ATP. Residue Asp254 coordinates L-methionine. Lys285 is a binding site for L-methionine.

Belongs to the AdoMet synthase family. Homotetramer; dimer of dimers. Requires Mg(2+) as cofactor. K(+) is required as a cofactor.

Its subcellular location is the cytoplasm. The enzyme catalyses L-methionine + ATP + H2O = S-adenosyl-L-methionine + phosphate + diphosphate. It participates in amino-acid biosynthesis; S-adenosyl-L-methionine biosynthesis; S-adenosyl-L-methionine from L-methionine: step 1/1. Functionally, catalyzes the formation of S-adenosylmethionine (AdoMet) from methionine and ATP. The overall synthetic reaction is composed of two sequential steps, AdoMet formation and the subsequent tripolyphosphate hydrolysis which occurs prior to release of AdoMet from the enzyme. The chain is S-adenosylmethionine synthase from Chlorobium luteolum (strain DSM 273 / BCRC 81028 / 2530) (Pelodictyon luteolum).